A 146-amino-acid chain; its full sequence is Zinc metalloproteinase-disintegrin salmosin-3 (146 aa).

A Peptidase M12B domain is found at 1–57 (SCPCDANSCIMSATLSNEPSSRFSDCSFSLPSRFSDCSFNQYSSDIIHYHECLLNEP). Cystine bridges form between Cys2–Cys37, Cys4–Cys9, Cys68–Cys87, Cys79–Cys97, Cys81–Cys92, Cys91–Cys114, Cys105–Cys111, Cys110–Cys135, and Cys123–Cys142. Residues 65-146 (PPVCGNYYPE…GQSGVCPRNT (82 aa)) enclose the Disintegrin domain. Residues 127–129 (RGD) carry the Cell attachment site motif.

Belongs to the venom metalloproteinase (M12B) family. P-II subfamily. P-IIb sub-subfamily. As to quaternary structure, monomer (disintegrin). Requires Zn(2+) as cofactor. Expressed by the venom gland.

It localises to the secreted. Snake venom zinc metalloproteinase that inhibits ADP-induced platelet aggregation (probably by binding integrin alpha-IIb/beta-3 (ITGA2B/ITGB3)) and degrades fibrinogen. The chain is Zinc metalloproteinase-disintegrin salmosin-3 from Gloydius brevicauda (Korean slamosa snake).